The chain runs to 339 residues: Anthranilate phosphoribosyltransferase (339 aa).

Residues Gly-79, 82 to 83 (GD), Thr-87, 89 to 92 (NVST), 107 to 115 (KHGNRAVSS), and Ser-119 contribute to the 5-phospho-alpha-D-ribose 1-diphosphate site. Residue Gly-79 coordinates anthranilate. Residue Ser-91 coordinates Mg(2+). Residue Asn-110 participates in anthranilate binding. Arg-165 lines the anthranilate pocket. The Mg(2+) site is built by Asp-224 and Glu-225.

Belongs to the anthranilate phosphoribosyltransferase family. Homodimer. Mg(2+) serves as cofactor.

The enzyme catalyses N-(5-phospho-beta-D-ribosyl)anthranilate + diphosphate = 5-phospho-alpha-D-ribose 1-diphosphate + anthranilate. It functions in the pathway amino-acid biosynthesis; L-tryptophan biosynthesis; L-tryptophan from chorismate: step 2/5. Its function is as follows. Catalyzes the transfer of the phosphoribosyl group of 5-phosphorylribose-1-pyrophosphate (PRPP) to anthranilate to yield N-(5'-phosphoribosyl)-anthranilate (PRA). This is Anthranilate phosphoribosyltransferase from Geobacillus kaustophilus (strain HTA426).